A 160-amino-acid polypeptide reads, in one-letter code: Endoribonuclease YbeY (160 aa).

Residues H124, H128, and H134 each contribute to the Zn(2+) site.

This sequence belongs to the endoribonuclease YbeY family. Zn(2+) serves as cofactor.

It localises to the cytoplasm. Its function is as follows. Single strand-specific metallo-endoribonuclease involved in late-stage 70S ribosome quality control and in maturation of the 3' terminus of the 16S rRNA. This Jannaschia sp. (strain CCS1) protein is Endoribonuclease YbeY.